We begin with the raw amino-acid sequence, 348 residues long: Major outer membrane protein P.IB (348 aa).

Residues 1–19 (MKKSLIALTLAALPVAATA) form the signal peptide.

The protein belongs to the Gram-negative porin family. In terms of assembly, homotrimer.

Its subcellular location is the cell outer membrane. Its function is as follows. Serves as a slightly cation selective porin. Major antigen on the gonococcal cell surface and it may have pathogenic properties in addition to its porin activity. This chain is Major outer membrane protein P.IB (porB), found in Neisseria gonorrhoeae.